A 634-amino-acid chain; its full sequence is Sodium-dependent neutral amino acid transporter B(0)AT1 (634 aa).

At 1–41 the chain is on the cytoplasmic side; sequence MVRLVLPNPGLEDRIPSLDELEVIEKEEASSRPKWDNKAQY. Ser-17 is subject to Phosphoserine. A helical membrane pass occupies residues 42 to 62; it reads MLTCVGFCVGLGNVWRFPYLC. Over 63–65 the chain is Extracellular; sequence QSH. The helical transmembrane segment at 66 to 86 threads the bilayer; it reads GGGAFMIPFLILLVLEGIPLL. At 87–119 the chain is on the cytoplasmic side; the sequence is HLEFAIGQRLRKGSVGVWSSIHPALKGVGIASM. A helical membrane pass occupies residues 120-140; that stretch reads FVSFMVGLYYNTIIAWVMWYF. At 141 to 192 the chain is on the extracellular side; the sequence is FNSFQEPLPWSECPLNQNQTGYVEECAKSSSVDYFWYRETLNISTSISDSGS. Asn-158 and Asn-182 each carry an N-linked (GlcNAc...) asparagine glycan. Residues 193–213 traverse the membrane as a helical segment; it reads IQWWILLCLTCAWSVLYVCTI. Topologically, residues 214-221 are cytoplasmic; the sequence is RGIETTGK. Residues 222 to 242 form a helical membrane-spanning segment; it reads AVYITSTLPYVVLTIFLIRGL. The Extracellular portion of the chain corresponds to 243-268; it reads TLKGATNGIVFLFTPNITELSNPNTW. N-linked (GlcNAc...) asparagine glycosylation is present at Asn-258. Residues 269 to 289 traverse the membrane as a helical segment; sequence LDAGAQVFYSFSLAFGGLISF. The Cytoplasmic portion of the chain corresponds to 290–304; the sequence is SSYNSVHNNCEMDSV. The chain crosses the membrane as a helical span at residues 305 to 325; it reads IVSIINGFTSVYAATVVYSII. The Extracellular portion of the chain corresponds to 326–413; that stretch reads GFRATERFDD…TEAITKMPVS (88 aa). N-linked (GlcNAc...) asparagine glycans are attached at residues Asn-354 and Asn-368. A helical transmembrane segment spans residues 414–434; it reads PLWSVLFFIMLFCLGLSSMFG. Residues 435-456 are Cytoplasmic-facing; the sequence is NMEGVVVPLQDLNITPKKWPKE. Residues 457 to 477 form a helical membrane-spanning segment; that stretch reads LLTGLICLGTYLIAFIFTLNS. The Extracellular portion of the chain corresponds to 478-490; that stretch reads GQYWLSLLDSYAG. The chain crosses the membrane as a helical span at residues 491 to 511; that stretch reads SIPLLIIAFCEMFAVVYVYGV. At 512-531 the chain is on the cytoplasmic side; sequence DRFNKDIEFMIGHKPNIFWQ. Residues 532 to 552 traverse the membrane as a helical segment; that stretch reads VTWRVVSPLIMLVIFLFFFVI. Over 553 to 581 the chain is Extracellular; sequence EVNKQLMYSVWDPDYEEFPKSQKVPYPDW. The helical transmembrane segment at 582–602 threads the bilayer; the sequence is VYAVVVIVAGVPCLTIPCFAI. Residues 603 to 634 are Cytoplasmic-facing; the sequence is YKLIRNYCQKSGDQHGLVNALSTASVNGDLKN. Residue Ser-627 is modified to Phosphoserine.

This sequence belongs to the sodium:neurotransmitter symporter (SNF) (TC 2.A.22) family. SLC6A19 subfamily. In terms of assembly, interacts in a tissue-specific manner with ACE2 in small intestine and with CLTRN in the kidney. Interacts with CLTRN; this interaction is required for trafficking of SLC6A19 to the plasma membrane and for its catalytic activation in kidneys. Interacts with ACE2; this interaction is required for trafficking of SLC6A19 to the plasma membrane and for its catalytic activation in intestine. Interacts with ANPEP; the interaction positively regulates its amino acid transporter activity.

Its subcellular location is the membrane. The catalysed reaction is L-alanine(in) + Na(+)(in) = L-alanine(out) + Na(+)(out). The enzyme catalyses L-cysteine(in) + Na(+)(in) = L-cysteine(out) + Na(+)(out). It catalyses the reaction L-glutamine(in) + Na(+)(in) = L-glutamine(out) + Na(+)(out). It carries out the reaction glycine(in) + Na(+)(in) = glycine(out) + Na(+)(out). The catalysed reaction is L-isoleucine(in) + Na(+)(in) = L-isoleucine(out) + Na(+)(out). The enzyme catalyses L-leucine(in) + Na(+)(in) = L-leucine(out) + Na(+)(out). It catalyses the reaction L-methionine(in) + Na(+)(in) = L-methionine(out) + Na(+)(out). It carries out the reaction L-phenylalanine(in) + Na(+)(in) = L-phenylalanine(out) + Na(+)(out). The catalysed reaction is L-serine(in) + Na(+)(in) = L-serine(out) + Na(+)(out). The enzyme catalyses L-tryptophan(in) + Na(+)(in) = L-tryptophan(out) + Na(+)(out). It catalyses the reaction L-tyrosine(in) + Na(+)(in) = L-tyrosine(out) + Na(+)(out). It carries out the reaction L-valine(in) + Na(+)(in) = L-valine(out) + Na(+)(out). Transporter that mediates resorption of neutral amino acids across the apical membrane of renal and intestinal epithelial cells. This uptake is sodium-dependent and chloride-independent. Requires CLTRN in kidney or ACE2 in intestine for cell surface expression and amino acid transporter activity. This Rattus norvegicus (Rat) protein is Sodium-dependent neutral amino acid transporter B(0)AT1.